Here is a 176-residue protein sequence, read N- to C-terminus: ATP synthase subunit b 2 (176 aa).

The helical transmembrane segment at 29–49 threads the bilayer; that stretch reads IFWLVITLVIIYMVLSKVALP.

This sequence belongs to the ATPase B chain family. In terms of assembly, F-type ATPases have 2 components, F(1) - the catalytic core - and F(0) - the membrane proton channel. F(1) has five subunits: alpha(3), beta(3), gamma(1), delta(1), epsilon(1). F(0) has three main subunits: a(1), b(2) and c(10-14). The alpha and beta chains form an alternating ring which encloses part of the gamma chain. F(1) is attached to F(0) by a central stalk formed by the gamma and epsilon chains, while a peripheral stalk is formed by the delta and b chains.

The protein resides in the cell inner membrane. Its function is as follows. F(1)F(0) ATP synthase produces ATP from ADP in the presence of a proton or sodium gradient. F-type ATPases consist of two structural domains, F(1) containing the extramembraneous catalytic core and F(0) containing the membrane proton channel, linked together by a central stalk and a peripheral stalk. During catalysis, ATP synthesis in the catalytic domain of F(1) is coupled via a rotary mechanism of the central stalk subunits to proton translocation. In terms of biological role, component of the F(0) channel, it forms part of the peripheral stalk, linking F(1) to F(0). The b'-subunit is a diverged and duplicated form of b found in plants and photosynthetic bacteria. This chain is ATP synthase subunit b 2 (atpF2), found in Roseobacter denitrificans (strain ATCC 33942 / OCh 114) (Erythrobacter sp. (strain OCh 114)).